Consider the following 112-residue polypeptide: UPF0145 protein MmarC6_1828 (112 aa).

Belongs to the UPF0145 family.

This Methanococcus maripaludis (strain C6 / ATCC BAA-1332) protein is UPF0145 protein MmarC6_1828.